The following is an 89-amino-acid chain: Acylphosphatase (89 aa).

An Acylphosphatase-like domain is found at 3 to 88 (TLHLQIEGRV…GEYSGFEKRS (86 aa)). Residues arginine 18 and asparagine 36 contribute to the active site.

Belongs to the acylphosphatase family.

It catalyses the reaction an acyl phosphate + H2O = a carboxylate + phosphate + H(+). This Thiobacillus denitrificans (strain ATCC 25259 / T1) protein is Acylphosphatase (acyP).